Reading from the N-terminus, the 738-residue chain is Ethylene receptor (738 aa).

The next 3 helical transmembrane spans lie at 23-43 (ISDFFIALAYFSIPLELIYFV), 54-74 (VLVQFGAFIVLCGATHLINLW), and 89-109 (IAKVLTAVVSCATALMLVHII). Positions 65 and 69 each coordinate Cu cation. One can recognise a GAF domain in the interval 158–307 (DRHTILRTTL…VVADQVAVAL (150 aa)). Positions 350 to 589 (VMNHEMRTPM…IFIVKLGIPE (240 aa)) constitute a Histidine kinase domain. His-353 carries the phosphohistidine; by autocatalysis modification. Residues 615–730 (KVLLMDDNGV…KMRSVLSDLL (116 aa)) form the Response regulatory domain. The residue at position 663 (Asp-663) is a 4-aspartylphosphate.

It belongs to the ethylene receptor family. Homodimer; disulfide-linked. Cu cation serves as cofactor. Activation probably requires a transfer of a phosphate group between a His in the transmitter domain and an Asp of the receiver domain. In terms of tissue distribution, higher expression in arils than in seeds.

Its subcellular location is the endoplasmic reticulum membrane. It carries out the reaction ATP + protein L-histidine = ADP + protein N-phospho-L-histidine.. Its function is as follows. May act early in the ethylene signal transduction pathway, possibly as an ethylene receptor, or as a regulator of the pathway. This is Ethylene receptor (ETR1) from Passiflora edulis (Passion fruit).